The sequence spans 645 residues: Acetyl-coenzyme A synthetase (645 aa).

CoA contacts are provided by residues 190-193 (RGGR) and Thr308. ATP contacts are provided by residues 384-386 (GEP), 408-413 (DTWWQT), Asp497, and Arg512. Ser520 contacts CoA. An ATP-binding site is contributed by Arg523. Mg(2+) contacts are provided by Val534, His536, and Val539. Residue Lys606 is modified to N6-acetyllysine.

Belongs to the ATP-dependent AMP-binding enzyme family. The cofactor is Mg(2+). In terms of processing, acetylated. Deacetylation by the SIR2-homolog deacetylase activates the enzyme.

It catalyses the reaction acetate + ATP + CoA = acetyl-CoA + AMP + diphosphate. Functionally, catalyzes the conversion of acetate into acetyl-CoA (AcCoA), an essential intermediate at the junction of anabolic and catabolic pathways. AcsA undergoes a two-step reaction. In the first half reaction, AcsA combines acetate with ATP to form acetyl-adenylate (AcAMP) intermediate. In the second half reaction, it can then transfer the acetyl group from AcAMP to the sulfhydryl group of CoA, forming the product AcCoA. The polypeptide is Acetyl-coenzyme A synthetase (Saccharophagus degradans (strain 2-40 / ATCC 43961 / DSM 17024)).